A 362-amino-acid chain; its full sequence is Cobalt-precorrin-5B C(1)-methyltransferase (362 aa).

The protein belongs to the CbiD family.

It carries out the reaction Co-precorrin-5B + S-adenosyl-L-methionine = Co-precorrin-6A + S-adenosyl-L-homocysteine. Its pathway is cofactor biosynthesis; adenosylcobalamin biosynthesis; cob(II)yrinate a,c-diamide from sirohydrochlorin (anaerobic route): step 6/10. Catalyzes the methylation of C-1 in cobalt-precorrin-5B to form cobalt-precorrin-6A. In Burkholderia orbicola (strain MC0-3), this protein is Cobalt-precorrin-5B C(1)-methyltransferase.